The chain runs to 882 residues: DNA mismatch repair protein MutS (882 aa).

Position 635–642 (635–642) interacts with ATP; it reads GPNMGGKS.

The protein belongs to the DNA mismatch repair MutS family.

In terms of biological role, this protein is involved in the repair of mismatches in DNA. It is possible that it carries out the mismatch recognition step. This protein has a weak ATPase activity. This Janthinobacterium sp. (strain Marseille) (Minibacterium massiliensis) protein is DNA mismatch repair protein MutS.